The sequence spans 583 residues: Radixin (583 aa).

In terms of domain architecture, FERM spans 5-295 (INVRVTTMDA…GNHELYMRRR (291 aa)). 60–63 (KLNK) contacts a 1,2-diacyl-sn-glycero-3-phospho-(1D-myo-inositol). Lys83 carries the post-translational modification N6-succinyllysine. Lys278 contacts a 1,2-diacyl-sn-glycero-3-phospho-(1D-myo-inositol). Disordered regions lie at residues 310–330 (REEKHQKQLERAQLENEKKKR), 376–407 (DQERKRAKEEAERLEKERRAAEEAKSAIAKQA), and 462–526 (ELKT…RVKK). Residues 376 to 400 (DQERKRAKEEAERLEKERRAAEEAK) are compositionally biased toward basic and acidic residues. Pro residues predominate over residues 469 to 480 (APPPPPPPPVIP). Basic and acidic residues-rich tracts occupy residues 483-492 (ENEHDEHDEN) and 506-525 (MNHRSEEERVTETQKNERVK). Thr564 carries the phosphothreonine; by ROCK2 modification.

Binds NHERF1. Interacts with NHERF1, NHERF2, LAYN, MME/NEP and ICAM2. Interacts with CPNE1 (via VWFA domain) and CPNE4 (via VWFA domain). Interacts (via FERM domain) with SPN/CD43 cytoplasmic tail. Interacts with CD44. Interacts with CLIC5; may work together in a complex which also includes EZR and MYO6 to stabilize linkages between the plasma membrane and subjacent actin cytoskeleton at the base of stereocilia. Post-translationally, phosphorylated by tyrosine-protein kinases. Phosphorylation by ROCK2 suppresses the head-to-tail association of the N-terminal and C-terminal halves resulting in an opened conformation which is capable of actin and membrane-binding.

Its subcellular location is the cell membrane. It is found in the cytoplasm. The protein resides in the cytoskeleton. The protein localises to the cleavage furrow. It localises to the cell projection. Its subcellular location is the microvillus. It is found in the stereocilium. A head-to-tail association, of the N-terminal and C-terminal halves results in a closed conformation (inactive form) which is incapable of actin or membrane-binding. Its function is as follows. Probably plays a crucial role in the binding of the barbed end of actin filaments to the plasma membrane. The chain is Radixin (RDX) from Homo sapiens (Human).